The sequence spans 78 residues: D-alanyl carrier protein (78 aa).

The Carrier domain maps to 1-78 (MEFREQVLDL…KIVEVLEELR (78 aa)). The residue at position 36 (Ser36) is an O-(pantetheine 4'-phosphoryl)serine.

Belongs to the DltC family. Post-translationally, 4'-phosphopantetheine is transferred from CoA to a specific serine of apo-DCP.

Its subcellular location is the cytoplasm. Its pathway is cell wall biogenesis; lipoteichoic acid biosynthesis. Functionally, carrier protein involved in the D-alanylation of lipoteichoic acid (LTA). The loading of thioester-linked D-alanine onto DltC is catalyzed by D-alanine--D-alanyl carrier protein ligase DltA. The DltC-carried D-alanyl group is further transferred to cell membrane phosphatidylglycerol (PG) by forming an ester bond, probably catalyzed by DltD. D-alanylation of LTA plays an important role in modulating the properties of the cell wall in Gram-positive bacteria, influencing the net charge of the cell wall. The protein is D-alanyl carrier protein of Staphylococcus xylosus.